The primary structure comprises 440 residues: Golgi-associated RAB2 interactor protein 2 (440 aa).

The protein belongs to the GARIN family. Interacts with CALM1. Expressed in testis (at protein level).

The protein localises to the cell projection. It localises to the cilium. Its subcellular location is the flagellum. Seems to play a role in sperm motility. This Mus musculus (Mouse) protein is Golgi-associated RAB2 interactor protein 2.